Here is a 267-residue protein sequence, read N- to C-terminus: Phosphatidylglycerol--prolipoprotein diacylglyceryl transferase (267 aa).

Transmembrane regions (helical) follow at residues 20-40, 57-77, 88-108, and 117-137; these read LEIRWYAICILLGLILGVYLA, FILIAFPLSILGARIYYVAFS, IFAIWNGGIAIYGGLITGAIV, and FINTLDFLDIVAPSVMIAQAI. Arg139 serves as a coordination point for a 1,2-diacyl-sn-glycero-3-phospho-(1'-sn-glycerol). The next 3 helical transmembrane spans lie at 175 to 195, 205 to 225, and 235 to 255; these read QPTFLFESLWNLLGFGLVCVL, GEITAFYLVWYGCGRLLIEGL, and IRVSQWLSGVLILVGIIMVVL.

It belongs to the Lgt family.

Its subcellular location is the cell membrane. The enzyme catalyses L-cysteinyl-[prolipoprotein] + a 1,2-diacyl-sn-glycero-3-phospho-(1'-sn-glycerol) = an S-1,2-diacyl-sn-glyceryl-L-cysteinyl-[prolipoprotein] + sn-glycerol 1-phosphate + H(+). It functions in the pathway protein modification; lipoprotein biosynthesis (diacylglyceryl transfer). Catalyzes the transfer of the diacylglyceryl group from phosphatidylglycerol to the sulfhydryl group of the N-terminal cysteine of a prolipoprotein, the first step in the formation of mature lipoproteins. In Streptococcus suis (strain 98HAH33), this protein is Phosphatidylglycerol--prolipoprotein diacylglyceryl transferase.